The chain runs to 189 residues: Glutathione-dependent formaldehyde-activating enzyme (189 aa).

The CENP-V/GFA domain occupies Phe-20–Asp-166. Cys-27, Cys-29, Cys-48, Cys-50, Cys-53, Cys-95, and Cys-98 together coordinate Zn(2+).

It belongs to the Gfa family. The cofactor is Zn(2+).

The catalysed reaction is S-(hydroxymethyl)glutathione = glutathione + formaldehyde. The protein operates within one-carbon metabolism; formaldehyde degradation; formate from formaldehyde (glutathione route): step 1/3. In terms of biological role, catalyzes the condensation of formaldehyde and glutathione to S-hydroxymethylglutathione. This chain is Glutathione-dependent formaldehyde-activating enzyme, found in Mesorhizobium japonicum (strain LMG 29417 / CECT 9101 / MAFF 303099) (Mesorhizobium loti (strain MAFF 303099)).